The following is a 96-amino-acid chain: Small ribosomal subunit protein bS6 (96 aa).

This sequence belongs to the bacterial ribosomal protein bS6 family.

In terms of biological role, binds together with bS18 to 16S ribosomal RNA. This chain is Small ribosomal subunit protein bS6, found in Streptococcus equi subsp. zooepidemicus (strain MGCS10565).